Consider the following 536-residue polypeptide: Fanconi anemia group E protein (536 aa).

The interaction with FANCC stretch occupies residues 150-371; the sequence is MEGASPLSER…VLTRSLFLGR (222 aa). Positions 171–252 are disordered; that stretch reads LGLGGRRLKS…ADGGSASPIK (82 aa). Over residues 230-239 the composition is skewed to basic and acidic residues; sequence EKERPEHKSL. S249 bears the Phosphoserine mark. Residue T346 is modified to Phosphothreonine; by CHEK1. A Phosphoserine; by CHEK1 modification is found at S374.

As to quaternary structure, belongs to the multisubunit FA complex composed of FANCA, FANCB, FANCC, FANCE, FANCF, FANCG, FANCL/PHF9 and FANCM. The complex is not found in FA patients. Interacts with FANCC and FANCD2. Phosphorylated. Phosphorylation by CHEK1 at Thr-346 and Ser-374 regulates its function in DNA cross-links repair. Post-translationally, ubiquitinated. Phosphorylation by CHEK1 induces polyubiquitination and degradation.

The protein resides in the nucleus. Its function is as follows. As part of the Fanconi anemia (FA) complex functions in DNA cross-links repair. Required for the nuclear accumulation of FANCC and provides a critical bridge between the FA complex and FANCD2. In Homo sapiens (Human), this protein is Fanconi anemia group E protein (FANCE).